We begin with the raw amino-acid sequence, 532 residues long: Flavin-containing monooxygenase 1 (532 aa).

A2 is modified (N-acetylalanine). The Lumenal segment spans residues 2–510 (AKRVAIVGAG…ARVVQESPSP (509 aa)). FAD contacts are provided by residues 9 to 13 (GAGVS), E32, 40 to 41 (LW), and 61 to 62 (NS). NADP(+) is bound by residues 60–61 (SN) and 195–198 (SGTD). A helical membrane pass occupies residues 511-531 (FESFLKVFSFLALLVAIFLIF). Position 532 (L532) is a topological domain, cytoplasmic.

This sequence belongs to the FMO family. FAD is required as a cofactor. Expressed mainly in fetal and adult liver.

It is found in the endoplasmic reticulum membrane. It carries out the reaction hypotaurine + NADPH + O2 + H(+) = taurine + NADP(+) + H2O. The catalysed reaction is hypotaurine + NADH + O2 + H(+) = taurine + NAD(+) + H2O. The enzyme catalyses trimethylamine + NADPH + O2 = trimethylamine N-oxide + NADP(+) + H2O. It catalyses the reaction N,N-dimethylaniline + NADPH + O2 + H(+) = N,N-dimethylaniline N-oxide + NADP(+) + H2O. Broad spectrum monooxygenase that catalyzes the oxygenation of a wide variety of nitrogen- and sulfur-containing compounds including xenobiotics. Catalyzes the S-oxygenation of hypotaurine to produce taurine, an organic osmolyte involved in cell volume regulation as well as a variety of cytoprotective and developmental processes. In vitro, catalyzes the N-oxygenation of trimethylamine (TMA) to produce trimethylamine N-oxide (TMAO) and could therefore participate to the detoxification of this compound that is generated by the action of gut microbiota from dietary precursors such as choline, choline containing compounds, betaine or L-carnitine. The protein is Flavin-containing monooxygenase 1 of Homo sapiens (Human).